The following is a 118-amino-acid chain: V-type proton ATPase subunit F (118 aa).

This sequence belongs to the V-ATPase F subunit family. In terms of assembly, V-ATPase is a heteromultimeric enzyme composed of a peripheral catalytic V1 complex (components A to H) attached to an integral membrane V0 proton pore complex (components: a, c, c', c'', d, e, f and VOA1).

The protein localises to the vacuole membrane. In terms of biological role, subunit of the V1 complex of vacuolar(H+)-ATPase (V-ATPase), a multisubunit enzyme composed of a peripheral complex (V1) that hydrolyzes ATP and a membrane integral complex (V0) that translocates protons. V-ATPase is responsible for acidifying and maintaining the pH of intracellular compartments. This Saccharomyces cerevisiae (strain ATCC 204508 / S288c) (Baker's yeast) protein is V-type proton ATPase subunit F.